We begin with the raw amino-acid sequence, 376 residues long: UPF0754 membrane protein BLi01057/BL02871 (376 aa).

2 consecutive transmembrane segments (helical) span residues 1–21 (MYVF…GAVT) and 356–376 (YLGG…VILI).

The protein belongs to the UPF0754 family.

The protein resides in the cell membrane. This chain is UPF0754 membrane protein BLi01057/BL02871, found in Bacillus licheniformis (strain ATCC 14580 / DSM 13 / JCM 2505 / CCUG 7422 / NBRC 12200 / NCIMB 9375 / NCTC 10341 / NRRL NRS-1264 / Gibson 46).